The following is a 392-amino-acid chain: Speckle-type POZ protein-like (392 aa).

In terms of domain architecture, MATH spans 31-161; sequence KFSYMWTINN…DDKLTLYCEV (131 aa). The BTB domain maps to 200–267; that stretch reads TDCSLFVEGK…IYTGGTPHVD (68 aa).

Belongs to the Tdpoz family. In terms of assembly, homodimer. Heterodimer with SPOP. Component of cullin-RING-based BCR (BTB-CUL3-RBX1) E3 ubiquitin-protein ligase complexes containing homodimeric SPOPL or the heterodimer formed by SPOP and SPOPL.

It localises to the nucleus. The protein operates within protein modification; protein ubiquitination. Component of a cullin-RING-based BCR (BTB-CUL3-RBX1) E3 ubiquitin-protein ligase complex that mediates the ubiquitination and subsequent proteasomal degradation of target proteins, but with relatively low efficiency. This Xenopus laevis (African clawed frog) protein is Speckle-type POZ protein-like (spopl).